We begin with the raw amino-acid sequence, 177 residues long: ATP synthase subunit delta (177 aa).

It belongs to the ATPase delta chain family. F-type ATPases have 2 components, F(1) - the catalytic core - and F(0) - the membrane proton channel. F(1) has five subunits: alpha(3), beta(3), gamma(1), delta(1), epsilon(1). F(0) has three main subunits: a(1), b(2) and c(10-14). The alpha and beta chains form an alternating ring which encloses part of the gamma chain. F(1) is attached to F(0) by a central stalk formed by the gamma and epsilon chains, while a peripheral stalk is formed by the delta and b chains.

It is found in the cell inner membrane. In terms of biological role, f(1)F(0) ATP synthase produces ATP from ADP in the presence of a proton or sodium gradient. F-type ATPases consist of two structural domains, F(1) containing the extramembraneous catalytic core and F(0) containing the membrane proton channel, linked together by a central stalk and a peripheral stalk. During catalysis, ATP synthesis in the catalytic domain of F(1) is coupled via a rotary mechanism of the central stalk subunits to proton translocation. Functionally, this protein is part of the stalk that links CF(0) to CF(1). It either transmits conformational changes from CF(0) to CF(1) or is implicated in proton conduction. The sequence is that of ATP synthase subunit delta from Shewanella amazonensis (strain ATCC BAA-1098 / SB2B).